A 205-amino-acid polypeptide reads, in one-letter code: Proteasome subunit beta type-3 (205 aa).

Residue S2 is modified to N-acetylserine. K77 bears the N6-acetyllysine mark.

The protein belongs to the peptidase T1B family. The 26S proteasome consists of a 20S proteasome core and two 19S regulatory subunits. The 20S proteasome core is a barrel-shaped complex made of 28 subunits that are arranged in four stacked rings. The two outer rings are each formed by seven alpha subunits, and the two inner rings are formed by seven beta subunits. The proteolytic activity is exerted by three beta-subunits PSMB5, PSMB6 and PSMB7. As to quaternary structure, (Microbial infection) Interacts with HIV-1 TAT protein.

It localises to the cytoplasm. The protein localises to the nucleus. Non-catalytic component of the 20S core proteasome complex involved in the proteolytic degradation of most intracellular proteins. This complex plays numerous essential roles within the cell by associating with different regulatory particles. Associated with two 19S regulatory particles, forms the 26S proteasome and thus participates in the ATP-dependent degradation of ubiquitinated proteins. The 26S proteasome plays a key role in the maintenance of protein homeostasis by removing misfolded or damaged proteins that could impair cellular functions, and by removing proteins whose functions are no longer required. Associated with the PA200 or PA28, the 20S proteasome mediates ubiquitin-independent protein degradation. This type of proteolysis is required in several pathways including spermatogenesis (20S-PA200 complex) or generation of a subset of MHC class I-presented antigenic peptides (20S-PA28 complex). The polypeptide is Proteasome subunit beta type-3 (Homo sapiens (Human)).